Consider the following 247-residue polypeptide: ATP synthase subunit a, chloroplastic (247 aa).

A run of 5 helical transmembrane segments spans residues 38 to 58 (QVLI…IIAV), 95 to 115 (VPFI…GALL), 134 to 154 (INTT…AGLT), 199 to 219 (LVVV…VMFL), and 220 to 240 (GLFT…AYIG).

Belongs to the ATPase A chain family. As to quaternary structure, F-type ATPases have 2 components, CF(1) - the catalytic core - and CF(0) - the membrane proton channel. CF(1) has five subunits: alpha(3), beta(3), gamma(1), delta(1), epsilon(1). CF(0) has four main subunits: a, b, b' and c.

Its subcellular location is the plastid. The protein localises to the chloroplast thylakoid membrane. Key component of the proton channel; it plays a direct role in the translocation of protons across the membrane. This is ATP synthase subunit a, chloroplastic from Morus indica (Mulberry).